A 452-amino-acid chain; its full sequence is AP-4 complex subunit mu-1 (452 aa).

Residues 184–451 enclose the MHD domain; it reads KNEVFLDVVE…LSHSDAYVIR (268 aa).

This sequence belongs to the adaptor complexes medium subunit family. Adaptor protein complex 4 (AP-4) is a heterotetramer composed of two large adaptins (epsilon-type subunit AP4E1 and beta-type subunit AP4B1), a medium adaptin (mu-type subunit AP4M1) and a small adaptin (sigma-type AP4S1). Interacts with tyrosine-based sorting signals on the cytoplasmic tail of cargo proteins such as APP, ATG9A, LAMP2 and NAGPA. Interacts with the C-terminal domain of GRID2. Interacts with GRIA1 and GRIA2; the interaction is indirect via CACNG3. Interacts with CACNG3; CACNG3 associates GRIA1 and GRIA2 with the adaptor protein complex 4 (AP-4) to target them to the somatodendritic compartment of neurons. Interacts with HOOK1 and HOOK2; the interactions are direct, mediate the interaction between FTS-Hook-FHIP (FHF) complex and AP-4 and the perinuclear distribution of AP-4.

It is found in the golgi apparatus. The protein resides in the trans-Golgi network membrane. It localises to the early endosome. Its function is as follows. Component of the adaptor protein complex 4 (AP-4). Adaptor protein complexes are vesicle coat components involved both in vesicle formation and cargo selection. They control the vesicular transport of proteins in different trafficking pathways. AP-4 forms a non clathrin-associated coat on vesicles departing the trans-Golgi network (TGN) and may be involved in the targeting of proteins from the trans-Golgi network (TGN) to the endosomal-lysosomal system. It is also involved in protein sorting to the basolateral membrane in epithelial cells and the proper asymmetric localization of somatodendritic proteins in neurons. Within AP-4, the mu-type subunit AP4M1 is directly involved in the recognition and binding of tyrosine-based sorting signals found in the cytoplasmic part of cargos. The adaptor protein complex 4 (AP-4) may also recognize other types of sorting signal. This Bos taurus (Bovine) protein is AP-4 complex subunit mu-1.